Reading from the N-terminus, the 120-residue chain is Large ribosomal subunit protein bL17 (120 aa).

This sequence belongs to the bacterial ribosomal protein bL17 family. As to quaternary structure, part of the 50S ribosomal subunit. Contacts protein L32.

The protein is Large ribosomal subunit protein bL17 of Bacillus subtilis (strain 168).